Here is a 194-residue protein sequence, read N- to C-terminus: ATP-dependent Clp protease proteolytic subunit (194 aa).

Residue Ser97 is the Nucleophile of the active site. His122 is a catalytic residue.

It belongs to the peptidase S14 family. In terms of assembly, fourteen ClpP subunits assemble into 2 heptameric rings which stack back to back to give a disk-like structure with a central cavity, resembling the structure of eukaryotic proteasomes.

The protein resides in the cytoplasm. The catalysed reaction is Hydrolysis of proteins to small peptides in the presence of ATP and magnesium. alpha-casein is the usual test substrate. In the absence of ATP, only oligopeptides shorter than five residues are hydrolyzed (such as succinyl-Leu-Tyr-|-NHMec, and Leu-Tyr-Leu-|-Tyr-Trp, in which cleavage of the -Tyr-|-Leu- and -Tyr-|-Trp bonds also occurs).. Cleaves peptides in various proteins in a process that requires ATP hydrolysis. Has a chymotrypsin-like activity. Plays a major role in the degradation of misfolded proteins. The chain is ATP-dependent Clp protease proteolytic subunit from Carsonella ruddii (strain PV).